A 243-amino-acid polypeptide reads, in one-letter code: PF03932 family protein CutC (243 aa).

This sequence belongs to the CutC family.

The protein localises to the cytoplasm. This Glaesserella parasuis serovar 5 (strain SH0165) (Haemophilus parasuis) protein is PF03932 family protein CutC.